Here is a 317-residue protein sequence, read N- to C-terminus: Protein CbxX, chromosomal (317 aa).

The segment at 1–21 (MSAPETTAPLQPPAAPAASLP) is disordered. ATP is bound at residue 85–92 (GNPGTGKT).

It belongs to the CbxX/CfxQ family.

Its function is as follows. Seems to be necessary for the expression of RuBisCO. This chain is Protein CbxX, chromosomal (cbxXC), found in Cupriavidus necator (strain ATCC 17699 / DSM 428 / KCTC 22496 / NCIMB 10442 / H16 / Stanier 337) (Ralstonia eutropha).